The following is a 147-amino-acid chain: Large ribosomal subunit protein uL16 (147 aa).

Residues 1-16 show a composition bias toward basic residues; that stretch reads MLMPKRVKRRRVHRGR. The segment at 1 to 20 is disordered; the sequence is MLMPKRVKRRRVHRGRMTGQ.

The protein belongs to the universal ribosomal protein uL16 family. Part of the 50S ribosomal subunit.

Binds 23S rRNA and is also seen to make contacts with the A and possibly P site tRNAs. The protein is Large ribosomal subunit protein uL16 of Alkaliphilus metalliredigens (strain QYMF).